The sequence spans 482 residues: Peptide chain release factor PrfB2, chloroplastic (482 aa).

A chloroplast-targeting transit peptide spans 1–21 (MLSLIIRRSRSRFIIHGIKIS).

The protein belongs to the prokaryotic/mitochondrial release factor family.

It localises to the plastid. The protein localises to the chloroplast stroma. Directs the termination of translation in response to the peptide chain termination codon UGA. Required for the proper translation, stability and normal processing of UGA-containing polycistronic transcripts in chloroplasts. The protein is Peptide chain release factor PrfB2, chloroplastic of Arabidopsis thaliana (Mouse-ear cress).